The chain runs to 1055 residues: Vacuolar protein sorting-associated protein 54 (1055 aa).

A coiled-coil region spans residues Thr363–Leu383. Residues Ile774–Ser794 form a disordered region.

It belongs to the VPS54 family. As to quaternary structure, component of the Golgi-associated retrograde protein (GARP) complex, also called VFT (VPS fifty-three) complex, composed of VPS51, VPS52, VPS53 and VPS54.

Its subcellular location is the golgi apparatus. The protein resides in the trans-Golgi network. Functionally, acts as a component of the GARP complex that is involved in retrograde transport from early and late endosomes to the trans-Golgi network (TGN). The GARP complex facilitates tethering as well as SNARE complex assembly at the Golgi. This is Vacuolar protein sorting-associated protein 54 (vps-54) from Caenorhabditis briggsae.